Consider the following 147-residue polypeptide: Protein phosphatase 1 regulatory subunit 14A (147 aa).

A compositionally biased stretch (basic residues) spans 1 to 11 (MAAQRLGKRVL). Residues 1-36 (MAAQRLGKRVLSKLQSPSRARGPGGSPSGLQKRHAR) are disordered. At serine 26 the chain carries Phosphoserine. The interval 35–120 (ARVTVKYDRR…LLAKLRGLHK (86 aa)) is inhibitory. Threonine 38 carries the phosphothreonine; by PKC modification. Residues 118–147 (LHKQPGFPQPSPSDDPSLSPRQDRAHTAPP) are disordered. A phosphoserine mark is found at serine 128, serine 134, and serine 136. Residues 138–147 (RQDRAHTAPP) are compositionally biased toward basic and acidic residues.

It belongs to the PP1 inhibitor family.

The protein localises to the cytoplasm. In terms of biological role, inhibitor of PPP1CA. Has over 1000-fold higher inhibitory activity when phosphorylated, creating a molecular switch for regulating the phosphorylation status of PPP1CA substrates and smooth muscle contraction. The chain is Protein phosphatase 1 regulatory subunit 14A (Ppp1r14a) from Mus musculus (Mouse).